Here is a 602-residue protein sequence, read N- to C-terminus: Elongation factor 4 (602 aa).

Residues 6–188 (DHIRNFSIVA…AIVNKLPAPK (183 aa)) enclose the tr-type G domain. GTP is bound by residues 18-23 (DHGKST) and 135-138 (NKID).

Belongs to the TRAFAC class translation factor GTPase superfamily. Classic translation factor GTPase family. LepA subfamily.

Its subcellular location is the cell inner membrane. It carries out the reaction GTP + H2O = GDP + phosphate + H(+). In terms of biological role, required for accurate and efficient protein synthesis under certain stress conditions. May act as a fidelity factor of the translation reaction, by catalyzing a one-codon backward translocation of tRNAs on improperly translocated ribosomes. Back-translocation proceeds from a post-translocation (POST) complex to a pre-translocation (PRE) complex, thus giving elongation factor G a second chance to translocate the tRNAs correctly. Binds to ribosomes in a GTP-dependent manner. The protein is Elongation factor 4 of Brucella abortus (strain 2308).